Reading from the N-terminus, the 462-residue chain is Cysteine--tRNA ligase (462 aa).

Cys29 contributes to the Zn(2+) binding site. Positions 31–41 (PTVYDHAHIGN) match the 'HIGH' region motif. Zn(2+)-binding residues include Cys214, His239, and Glu243. Residues 272 to 276 (KMSKS) carry the 'KMSKS' region motif. Residue Lys275 participates in ATP binding.

This sequence belongs to the class-I aminoacyl-tRNA synthetase family. As to quaternary structure, monomer. Requires Zn(2+) as cofactor.

The protein localises to the cytoplasm. It carries out the reaction tRNA(Cys) + L-cysteine + ATP = L-cysteinyl-tRNA(Cys) + AMP + diphosphate. The protein is Cysteine--tRNA ligase of Xanthobacter autotrophicus (strain ATCC BAA-1158 / Py2).